The following is a 104-amino-acid chain: L-rhamnose mutarotase (104 aa).

Tyr18 contacts substrate. His22 acts as the Proton donor in catalysis. Substrate-binding positions include Tyr41 and 76–77; that span reads WW.

It belongs to the rhamnose mutarotase family. In terms of assembly, homodimer.

The protein localises to the cytoplasm. The enzyme catalyses alpha-L-rhamnose = beta-L-rhamnose. It participates in carbohydrate metabolism; L-rhamnose metabolism. In terms of biological role, involved in the anomeric conversion of L-rhamnose. The polypeptide is L-rhamnose mutarotase (Salmonella dublin (strain CT_02021853)).